Reading from the N-terminus, the 693-residue chain is Methionine--tRNA ligase (693 aa).

The 'HIGH' region motif lies at 12 to 22 (PYANGPLHLGH). Zn(2+) is bound by residues cysteine 143, cysteine 146, cysteine 156, and cysteine 159. The short motif at 330 to 334 (KMSKS) is the 'KMSKS' region element. Lysine 333 contributes to the ATP binding site. The disordered stretch occupies residues 557-576 (APTAKNEAAKPAAPAAAKTE). One can recognise a tRNA-binding domain in the interval 590-693 (DFAKLDLRIG…SGAQPGMPVR (104 aa)).

The protein belongs to the class-I aminoacyl-tRNA synthetase family. MetG type 1 subfamily. Homodimer. It depends on Zn(2+) as a cofactor.

It is found in the cytoplasm. It carries out the reaction tRNA(Met) + L-methionine + ATP = L-methionyl-tRNA(Met) + AMP + diphosphate. Is required not only for elongation of protein synthesis but also for the initiation of all mRNA translation through initiator tRNA(fMet) aminoacylation. This chain is Methionine--tRNA ligase, found in Stenotrophomonas maltophilia (strain R551-3).